We begin with the raw amino-acid sequence, 469 residues long: Cholesterol 7-desaturase nvd (469 aa).

Residues 1–25 (MASFCASKFLPGLLMLGLGLAVALA) form the signal peptide. Residues 58–78 (NFVASQTLLTLTIFGVASFIL) traverse the membrane as a helical segment. Residues 132–238 (IPLVASQDLV…VIEQNGFVLV (107 aa)) enclose the Rieske domain. Positions 172, 174, 192, and 195 each coordinate [2Fe-2S] cluster.

This sequence belongs to the cholesterol 7-desaturase family. [2Fe-2S] cluster is required as a cofactor.

Its subcellular location is the membrane. It carries out the reaction cholesterol + NADPH + O2 + H(+) = 7-dehydrocholesterol + NADP(+) + 2 H2O. The enzyme catalyses cholesterol + NADH + O2 + H(+) = 7-dehydrocholesterol + NAD(+) + 2 H2O. It functions in the pathway steroid hormone biosynthesis; dafachronic acid biosynthesis. Its function is as follows. Catalyzes the production of 7-dehydrocholesterol (7-DHC or cholesta-5,7-dien-3beta-ol) by inserting a double bond (desaturating) at the C7-C8 single bond of cholesterol. Essential regulator of steroid biosynthesis as this reaction is the first step in the synthesis of the steroid hormone Delta(7)-dafachronic acid. The polypeptide is Cholesterol 7-desaturase nvd (Hemicentrotus pulcherrimus (Sea urchin)).